The primary structure comprises 272 residues: MATELRATEHGRQKISEKFDELKQKKEGALIGYVMAGDPSAEATFGIVKALVNGGADIIELGFPFSDPVADGPTIQAAGQRALAAGMDIEHYFELVRGLGVEVPLVCMTYYNPVFRYGVDKFVEHAADAGISGLIIPDIPVEEAADLKSSCEKYGLDLIFLVAPTTTDARIRKILERGSGFIYLVSRLGVTGARADVSGSTKELLSRVKTDIPKAVGFGISTGKQAAEVRKAGADAVIVGSVFVRIIEEGNGVNEKLEALARELKSGILGAN.

Residues Glu60 and Asp71 each act as proton acceptor in the active site.

Belongs to the TrpA family. In terms of assembly, tetramer of two alpha and two beta chains.

It carries out the reaction (1S,2R)-1-C-(indol-3-yl)glycerol 3-phosphate + L-serine = D-glyceraldehyde 3-phosphate + L-tryptophan + H2O. It participates in amino-acid biosynthesis; L-tryptophan biosynthesis; L-tryptophan from chorismate: step 5/5. In terms of biological role, the alpha subunit is responsible for the aldol cleavage of indoleglycerol phosphate to indole and glyceraldehyde 3-phosphate. This chain is Tryptophan synthase alpha chain, found in Methanosarcina acetivorans (strain ATCC 35395 / DSM 2834 / JCM 12185 / C2A).